The chain runs to 254 residues: Autophagy-related protein 5 (254 aa).

Residue Lys102 forms a Glycyl lysine isopeptide (Lys-Gly) (interchain with G-Cter in ATG12) linkage.

Belongs to the ATG5 family. As to quaternary structure, conjugated with ATG12. The ATG5-ATG12 conjugate forms a complex with several units of ATG16. The ATG12-ATG5 conjugate also associates with ATG3. In terms of processing, conjugated to ATG12; which is essential for autophagy. Conjugation with ATG12 involves ATG7 as an E1-like activating enzyme and ATG10 as an E2-like conjugating enzyme.

Its subcellular location is the preautophagosomal structure membrane. Functionally, involved in cytoplasm to vacuole transport (Cvt) and autophagic vesicle formation. Autophagy is essential for maintenance of amino acid levels and protein synthesis under nitrogen starvation. Required for selective autophagic degradation of the nucleus (nucleophagy). Also required for mitophagy, which eliminates defective or superfluous mitochondria in order to fulfill cellular energy requirements and prevent excess ROS production. Conjugation with ATG12, through a ubiquitin-like conjugating system involving ATG7 as an E1-like activating enzyme and ATG10 as an E2-like conjugating enzyme, is essential for its function. The ATG12-ATG5 conjugate acts as an E3-like enzyme which is required for lipidation of ATG8 and ATG8 association to the vesicle membranes. ATG12-ATG5 rearranges the ATG3 catalytic center and enhances its E2 activity. Autophagy is required for proper vegetative growth, asexual/sexual reproduction, and full virulence. Autophagy is particularly involved in the biosynthesis of deoxynivalenol (DON), an important virulence determinant. This is Autophagy-related protein 5 from Gibberella zeae (strain ATCC MYA-4620 / CBS 123657 / FGSC 9075 / NRRL 31084 / PH-1) (Wheat head blight fungus).